Reading from the N-terminus, the 299-residue chain is UDP-N-acetylenolpyruvoylglucosamine reductase (299 aa).

The region spanning 28-193 (IGGPVDLMVL…VSALMQLHKE (166 aa)) is the FAD-binding PCMH-type domain. Arginine 172 is an active-site residue. The active-site Proton donor is the serine 222. The active site involves glutamate 292.

The protein belongs to the MurB family. FAD is required as a cofactor.

It is found in the cytoplasm. It carries out the reaction UDP-N-acetyl-alpha-D-muramate + NADP(+) = UDP-N-acetyl-3-O-(1-carboxyvinyl)-alpha-D-glucosamine + NADPH + H(+). It participates in cell wall biogenesis; peptidoglycan biosynthesis. Its function is as follows. Cell wall formation. This is UDP-N-acetylenolpyruvoylglucosamine reductase from Syntrophomonas wolfei subsp. wolfei (strain DSM 2245B / Goettingen).